Consider the following 268-residue polypeptide: Phosphatidylglycerol--prolipoprotein diacylglyceryl transferase (268 aa).

7 helical membrane passes run 27–47, 66–86, 104–124, 130–150, 181–201, 208–228, and 242–262; these read PALRWYGFTYLVGFVAAMWLL, LLFYGFLGVILGGRIGYVLFY, GGMSFHGGLMGVITAMIYIAW, FFAVADMVAPVVPIGLGAGRI, PSQLYQFALEGVALFLLLYWF, VGAVSGMFLLGYGIFRVIVET, and FMTMGQILSVPMILFGLYLIL. A 1,2-diacyl-sn-glycero-3-phospho-(1'-sn-glycerol) is bound at residue Arg149.

The protein belongs to the Lgt family.

Its subcellular location is the cell inner membrane. It catalyses the reaction L-cysteinyl-[prolipoprotein] + a 1,2-diacyl-sn-glycero-3-phospho-(1'-sn-glycerol) = an S-1,2-diacyl-sn-glyceryl-L-cysteinyl-[prolipoprotein] + sn-glycerol 1-phosphate + H(+). It functions in the pathway protein modification; lipoprotein biosynthesis (diacylglyceryl transfer). Its function is as follows. Catalyzes the transfer of the diacylglyceryl group from phosphatidylglycerol to the sulfhydryl group of the N-terminal cysteine of a prolipoprotein, the first step in the formation of mature lipoproteins. The protein is Phosphatidylglycerol--prolipoprotein diacylglyceryl transferase of Shewanella sp. (strain ANA-3).